Reading from the N-terminus, the 414-residue chain is Probable isoprenylcysteine alpha-carbonyl methylesterase ICME (414 aa).

The tract at residues 1-54 (MQPASPVSGDAGPVAEAVPPRGAPQVLVRRRSVPFSPDSPLAPGSRGGGERRST) is disordered. The next 2 helical transmembrane spans lie at 90–110 (LAAL…VGYY) and 145–165 (VVAF…GALL). Residues 151 to 153 (GGA) and 222 to 224 (QSA) each bind substrate. Residues Ser223, Asp323, and His355 contribute to the active site.

Belongs to the AB hydrolase superfamily. Isoprenylcysteine methylesterase family.

It localises to the endoplasmic reticulum membrane. Its subcellular location is the golgi apparatus membrane. It catalyses the reaction [protein]-C-terminal S-[(2E,6E)-farnesyl]-L-cysteine methyl ester + H2O = [protein]-C-terminal S-[(2E,6E)-farnesyl]-L-cysteine + methanol + H(+). In terms of biological role, catalyzes the demethylation of isoprenylcysteine methylesters. The polypeptide is Probable isoprenylcysteine alpha-carbonyl methylesterase ICME (IMCE) (Oryza sativa subsp. japonica (Rice)).